Here is a 314-residue protein sequence, read N- to C-terminus: tRNA dimethylallyltransferase (314 aa).

A disordered region spans residues Met-1–Ser-25. Gly-40–Ser-47 serves as a coordination point for ATP. Thr-42–Ser-47 contributes to the substrate binding site.

Belongs to the IPP transferase family. In terms of assembly, monomer. Mg(2+) is required as a cofactor.

The enzyme catalyses adenosine(37) in tRNA + dimethylallyl diphosphate = N(6)-dimethylallyladenosine(37) in tRNA + diphosphate. Functionally, catalyzes the transfer of a dimethylallyl group onto the adenine at position 37 in tRNAs that read codons beginning with uridine, leading to the formation of N6-(dimethylallyl)adenosine (i(6)A). The chain is tRNA dimethylallyltransferase from Cereibacter sphaeroides (strain ATCC 17023 / DSM 158 / JCM 6121 / CCUG 31486 / LMG 2827 / NBRC 12203 / NCIMB 8253 / ATH 2.4.1.) (Rhodobacter sphaeroides).